Reading from the N-terminus, the 155-residue chain is Ribosomal RNA large subunit methyltransferase H (155 aa).

S-adenosyl-L-methionine is bound by residues leucine 72, glycine 103, and 122-127 (LSDLTL).

It belongs to the RNA methyltransferase RlmH family. Homodimer.

It localises to the cytoplasm. It catalyses the reaction pseudouridine(1915) in 23S rRNA + S-adenosyl-L-methionine = N(3)-methylpseudouridine(1915) in 23S rRNA + S-adenosyl-L-homocysteine + H(+). In terms of biological role, specifically methylates the pseudouridine at position 1915 (m3Psi1915) in 23S rRNA. This Verminephrobacter eiseniae (strain EF01-2) protein is Ribosomal RNA large subunit methyltransferase H.